The following is a 644-amino-acid chain: Exoribonuclease 2 (644 aa).

The RNB domain occupies 189–516 (REDLTALNFV…NHRLLKAMIT (328 aa)). The S1 motif domain maps to 561 to 643 (DTRFTAEIID…ETRNVIARPV (83 aa)).

The protein belongs to the RNR ribonuclease family. RNase II subfamily.

The protein localises to the cytoplasm. It carries out the reaction Exonucleolytic cleavage in the 3'- to 5'-direction to yield nucleoside 5'-phosphates.. In terms of biological role, involved in mRNA degradation. Hydrolyzes single-stranded polyribonucleotides processively in the 3' to 5' direction. This chain is Exoribonuclease 2, found in Yersinia pestis bv. Antiqua (strain Antiqua).